A 534-amino-acid polypeptide reads, in one-letter code: Allene oxide synthase 1, chloroplastic (534 aa).

Disordered stretches follow at residues 1-31 (MASTSLSLPSLKLQFPSHTSSSSRKNSSSYR) and 43-71 (EIPPYISSPSQSPSSSSSPPVKQAKLPAQ). The transit peptide at 1-69 (MASTSLSLPS…SPPVKQAKLP (69 aa)) directs the protein to the chloroplast. 2 stretches are compositionally biased toward low complexity: residues 17–31 (SHTSSSSRKNSSSYR) and 43–62 (EIPPYISSPSQSPSSSSSPP). Lys149, His180, and Lys184 together coordinate heme b. Asn337 and Lys343 together coordinate (13S)-hydroperoxy-(9Z,11E)-octadecadienoate. Residue Asn337 participates in (13S)-hydroperoxy-(9Z,11E,15Z)-octadecatrienoate binding. Residues Lys485 and Cys487 each coordinate heme b.

Belongs to the cytochrome P450 family. The cofactor is heme b. Expressed in flowers. Detected in stems and roots, but not in leaves and fruits under non-inducing conditions.

Its subcellular location is the plastid. The protein resides in the chloroplast. The enzyme catalyses (13S)-hydroperoxy-(9Z,11E,15Z)-octadecatrienoate = (9Z,13S,15Z)-12,13-epoxyoctadeca-9,11,15-trienoate + H2O. The catalysed reaction is (13S)-hydroperoxy-(9Z,11E)-octadecadienoate = (9Z,13S)-12,13-epoxyoctadeca-9,11-dienoate + H2O. Cytochrome P450 of the CYP74A subfamily involved in the biosynthesis of jasmonic acid from lipoxygenase-derived hydroperoxides of free fatty acids. Catalyzes the synthesis of unstable allene oxide, which is further converted spontaneously by hydrolysis or cyclization. Can use 13S-hydroperoxy-9(Z),11(E),15(Z)-octadecatrienoic acid (13-HPOT) and 13S-hydroperoxy-9(Z),11(E)-octadecadienoic acid (13-HPOD) as substrates. This is Allene oxide synthase 1, chloroplastic from Solanum lycopersicum (Tomato).